The following is a 151-amino-acid chain: Putative pre-16S rRNA nuclease (151 aa).

It belongs to the YqgF nuclease family.

It localises to the cytoplasm. In terms of biological role, could be a nuclease involved in processing of the 5'-end of pre-16S rRNA. This chain is Putative pre-16S rRNA nuclease, found in Myxococcus xanthus (strain DK1622).